Here is a 147-residue protein sequence, read N- to C-terminus: Large ribosomal subunit protein bL9 (147 aa).

The protein belongs to the bacterial ribosomal protein bL9 family.

Its function is as follows. Binds to the 23S rRNA. This is Large ribosomal subunit protein bL9 from Halalkalibacterium halodurans (strain ATCC BAA-125 / DSM 18197 / FERM 7344 / JCM 9153 / C-125) (Bacillus halodurans).